A 126-amino-acid polypeptide reads, in one-letter code: Adenosine 5'-monophosphoramidase HINT1 (126 aa).

Position 2 is an N-acetylalanine (A2). The 109-residue stretch at 18–126 (IFGKIIRKEI…GGRQMHWPPG (109 aa)) folds into the HIT domain. N6-acetyllysine occurs at positions 21 and 30. 43–44 (DI) is a binding site for AMP. A phosphoserine mark is found at S45 and S72. AMP-binding positions include N99, 105 to 107 (GQS), and 112 to 114 (HLH). Residues 110–114 (HVHLH) carry the Histidine triad motif motif. H112 functions as the Tele-AMP-histidine intermediate in the catalytic mechanism.

The protein belongs to the HINT family. As to quaternary structure, homodimer. Interacts with CDK7. Interacts with RUVBL1 and RUVBL2 and is associated with the LEF1/TCF1-CTNNB1 complex and with a KAT5 histone acetyltransferase complex. Identified in a complex with MITF and CTNNB1. Interacts with CDC34 and RBX1, and is part of a SCF (SKP2-CUL1-F-box protein) E3 ubiquitin-protein ligase complex. Interacts with SUMO1, SUMO2 and RGS17. Interacts with the Ten-1 ICD form of TENM1. Interacts with CALM1; interaction increases in the presence of calcium ions. In terms of tissue distribution, widely expressed.

It localises to the cytoplasm. The protein localises to the nucleus. It catalyses the reaction adenosine 5'-phosphoramidate + H2O = AMP + NH4(+). In terms of biological role, exhibits adenosine 5'-monophosphoramidase activity, hydrolyzing purine nucleotide phosphoramidates with a single phosphate group such as adenosine 5'monophosphoramidate (AMP-NH2) to yield AMP and NH2. Hydrolyzes adenosine 5'monophosphomorpholidate (AMP-morpholidate) and guanosine 5'monophosphomorpholidate (GMP-morpholidate). Hydrolyzes lysyl-AMP (AMP-N-epsilon-(N-alpha-acetyl lysine methyl ester)) generated by lysine tRNA ligase, as well as Met-AMP, His-AMP and Asp-AMP, lysyl-GMP (GMP-N-epsilon-(N-alpha-acetyl lysine methyl ester)) and AMP-N-alanine methyl ester. Hydrolyzes 3-indolepropionic acyl-adenylate, tryptamine adenosine phosphoramidate monoester and other fluorogenic purine nucleoside tryptamine phosphoramidates in vitro. Can also convert adenosine 5'-O-phosphorothioate and guanosine 5'-O-phosphorothioate to the corresponding nucleoside 5'-O-phosphates with concomitant release of hydrogen sulfide. In addition, functions as scaffolding protein that modulates transcriptional activation by the LEF1/TCF1-CTNNB1 complex and by the complex formed with MITF and CTNNB1. Modulates p53/TP53 levels and p53/TP53-mediated apoptosis. Modulates proteasomal degradation of target proteins by the SCF (SKP2-CUL1-F-box protein) E3 ubiquitin-protein ligase complex. Also exhibits SUMO-specific isopeptidase activity, deconjugating SUMO1 from RGS17. Deconjugates SUMO1 from RANGAP1. The protein is Adenosine 5'-monophosphoramidase HINT1 (HINT1) of Homo sapiens (Human).